The chain runs to 328 residues: MSEKIRVLLYYKYVSIENAEEYAAKHLEFCKSIGLKGRILIADEGINGTVSGDYETTQKYMDWVHSDERFADLWFKIDEENQQAFRKMFVRYKKEIVHLGLEDNNFDSDINPLETTGEYLNPKQFKEALLDEDTVVLDTRNDYEYDLGHFRGAIRPDIRNFRELPQWVRDNKDKFMEKRVVVYCTGGVRCEKFSGWMVREGFKDVGQLHGGIATYGKDPEVQGELWDGAMYVFDDRISVPINHVNPTVISKDYFDGTPCERYVNCANPFCNKQIFASEENEAKYVRGCSPECRAHERNRYVQENGLSRQEWAERLEAIGESLPQVANV.

One can recognise a Rhodanese domain in the interval 130-224; sequence LDEDTVVLDT…YGKDPEVQGE (95 aa). The active-site Cysteine persulfide intermediate is Cys-184.

It belongs to the TrhO family.

It carries out the reaction uridine(34) in tRNA + AH2 + O2 = 5-hydroxyuridine(34) in tRNA + A + H2O. Functionally, catalyzes oxygen-dependent 5-hydroxyuridine (ho5U) modification at position 34 in tRNAs. The chain is tRNA uridine(34) hydroxylase from Streptococcus agalactiae serotype Ia (strain ATCC 27591 / A909 / CDC SS700).